The sequence spans 380 residues: MNNPFKDMDCYEILQVNHDSDLQEIKANYRKLALQYHPDRNPGIEDYNEIFSQINAAYNILSNDDKRKWHEKDYLRNQYSVQIEDVLQHLQTIEKIPFESTSAFVERLRQDEKIAGSTDDLPTLGDTTWLWTYAKPIYQKWLRFSTKKSFEWEALYNEEEESDAATRRLMKRQNQRQIQYCIQRYNELVRDLIGKACDLDPRRKNVVKLSDGERYNSLQEASRKQSERDRRQYQETFKNQSIASWTIIDQEETSSDDESLSKEIVNSNPIMCMVCNKNFRSQNQLENHENSKKHKKNLRKMNQEIKKHAKEAQKNAESNKQPEDAPSESPYSNKVSSSDFYTRSFEEIEKTFTFVEISDNEFYTASEDGFLNEDDKLDQD.

A J domain is found at 9–74; the sequence is DCYEILQVNH…DKRKWHEKDY (66 aa). A C2H2-type zinc finger spans residues 270–294; that stretch reads IMCMVCNKNFRSQNQLENHENSKKH. A disordered region spans residues 307-337; it reads KHAKEAQKNAESNKQPEDAPSESPYSNKVSS. Serine 344 carries the phosphoserine modification. Positions 352 to 355 match the AIM motif; it reads FTFV. Positions 361 to 367 match the FFAT motif; that stretch reads EFYTASE.

In terms of assembly, interacts (via the AIM motif) with atg8. Interacts (via the FFAT motif) with the vesicle-associated membrane protein-associated protein (VAP) family proteins scs2 and scs22.

It localises to the endoplasmic reticulum. It is found in the preautophagosomal structure. In terms of biological role, reticulophagy receptor required for autophagosomal sequestration of endoplasmic reticulum (ER) membranes during ER stress. Confers resistance to ER stress by promoting the autophagic degradation of the ER (ER-phagy or reticulophagy). Acts as a bridging molecule to mediate the association between atg8 on the autophagic membrane and the vesicle-associated membrane protein-associated proteins (VAPs) scs2 and scs22 on the ER. May play a role in meiosis. The polypeptide is ER-phagy receptor 1 (Schizosaccharomyces pombe (strain 972 / ATCC 24843) (Fission yeast)).